Here is a 189-residue protein sequence, read N- to C-terminus: 3-hydroxyanthranilate 3,4-dioxygenase (189 aa).

Arginine 50 contacts O2. 3 residues coordinate Fe cation: histidine 54, glutamate 60, and histidine 102. Residue glutamate 60 participates in substrate binding. Substrate-binding residues include arginine 106 and glutamate 116. Cysteine 131, cysteine 136, cysteine 170, and cysteine 173 together coordinate a divalent metal cation.

Belongs to the 3-HAO family. The cofactor is Fe(2+).

It localises to the cytoplasm. The catalysed reaction is 3-hydroxyanthranilate + O2 = (2Z,4Z)-2-amino-3-carboxymuconate 6-semialdehyde. It functions in the pathway cofactor biosynthesis; NAD(+) biosynthesis; quinolinate from L-kynurenine: step 3/3. Functionally, catalyzes the oxidative ring opening of 3-hydroxyanthranilate to 2-amino-3-carboxymuconate semialdehyde, which spontaneously cyclizes to quinolinate. The protein is 3-hydroxyanthranilate 3,4-dioxygenase (bna1) of Aspergillus niger (strain ATCC MYA-4892 / CBS 513.88 / FGSC A1513).